The primary structure comprises 500 residues: Type-2 serine--tRNA ligase (500 aa).

Ala305 contacts L-serine. A Zn(2+)-binding site is contributed by Cys307. Arg337 contacts L-serine. Residues 337–339 and 348–349 each bind ATP; these read RYE and RV. Residues 354 to 356 and Gln401 each bind L-serine; that span reads RIE. Zn(2+) is bound at residue Glu356. ATP is bound at residue Glu430. Asn433 contacts L-serine. Cys459 serves as a coordination point for Zn(2+). Arg466 serves as a coordination point for ATP.

The protein belongs to the class-II aminoacyl-tRNA synthetase family. Type-2 seryl-tRNA synthetase subfamily. Homodimer. The cofactor is Zn(2+).

It localises to the cytoplasm. It carries out the reaction tRNA(Ser) + L-serine + ATP = L-seryl-tRNA(Ser) + AMP + diphosphate + H(+). The enzyme catalyses tRNA(Sec) + L-serine + ATP = L-seryl-tRNA(Sec) + AMP + diphosphate + H(+). The protein operates within aminoacyl-tRNA biosynthesis; selenocysteinyl-tRNA(Sec) biosynthesis; L-seryl-tRNA(Sec) from L-serine and tRNA(Sec): step 1/1. Functionally, catalyzes the attachment of serine to tRNA(Ser). Is also able to aminoacylate tRNA(Sec) with serine, to form the misacylated tRNA L-seryl-tRNA(Sec), which will be further converted into selenocysteinyl-tRNA(Sec). This is Type-2 serine--tRNA ligase from Methanothrix thermoacetophila (strain DSM 6194 / JCM 14653 / NBRC 101360 / PT) (Methanosaeta thermophila).